A 131-amino-acid polypeptide reads, in one-letter code: Phosphoribosyl-AMP cyclohydrolase (131 aa).

Mg(2+) is bound at residue Asp-90. Cys-91 lines the Zn(2+) pocket. Mg(2+) is bound by residues Asp-92 and Asp-94. Zn(2+) contacts are provided by Cys-107 and Cys-114.

Belongs to the PRA-CH family. In terms of assembly, homodimer. Mg(2+) serves as cofactor. The cofactor is Zn(2+).

It is found in the cytoplasm. The enzyme catalyses 1-(5-phospho-beta-D-ribosyl)-5'-AMP + H2O = 1-(5-phospho-beta-D-ribosyl)-5-[(5-phospho-beta-D-ribosylamino)methylideneamino]imidazole-4-carboxamide. It functions in the pathway amino-acid biosynthesis; L-histidine biosynthesis; L-histidine from 5-phospho-alpha-D-ribose 1-diphosphate: step 3/9. Its function is as follows. Catalyzes the hydrolysis of the adenine ring of phosphoribosyl-AMP. This Hyphomonas neptunium (strain ATCC 15444) protein is Phosphoribosyl-AMP cyclohydrolase.